The chain runs to 395 residues: Probable protein arginine N-methyltransferase 6.2 (395 aa).

A compositionally biased stretch (gly residues) spans 1–11; it reads MFAGGADGGNG. The disordered stretch occupies residues 1–37; that stretch reads MFAGGADGGNGHLPRPRRARRGGGGGGGMGSPPLGPP. The region spanning 45-390 is the SAM-dependent MTase PRMT-type domain; that stretch reads DMAYFKAYSH…YFTRDQWYVK (346 aa). The S-adenosyl-L-methionine site is built by H58, R67, G91, D113, and E142. Catalysis depends on residues E156 and E165. A disordered region spans residues 300–324; the sequence is KKQANQCLDGNTQDASPSNKKKKAD. The segment covering 302 to 317 has biased composition (polar residues); the sequence is QANQCLDGNTQDASPS.

This sequence belongs to the class I-like SAM-binding methyltransferase superfamily. Protein arginine N-methyltransferase family. PRMT6 subfamily.

Functionally, arginine methyltransferase that can both catalyze the formation of omega-N monomethylarginine (MMA) and asymmetrical dimethylarginine (aDMA). The sequence is that of Probable protein arginine N-methyltransferase 6.2 (PRMT6.2) from Oryza sativa subsp. indica (Rice).